Here is a 40-residue protein sequence, read N- to C-terminus: Peroxisomal LYS1 stabilizing protein 1 (40 aa).

Polar residues predominate over residues 1 to 10; sequence MTAKTKQSWN. The disordered stretch occupies residues 1 to 20; sequence MTAKTKQSWNKGIWENGKQG.

Its subcellular location is the cytoplasm. The protein localises to the cytosol. It is found in the peroxisome matrix. Its function is as follows. Modulates the lysine biosynthesis pathway, possibly by stabilizing the lysine biosynthesis LYS1 protein in lysine-deplete conditions. In Saccharomyces cerevisiae (strain ATCC 204508 / S288c) (Baker's yeast), this protein is Peroxisomal LYS1 stabilizing protein 1.